A 612-amino-acid chain; its full sequence is MGWEYAQVHLKYTIPFGVVLAAVYRPLMSRLDVFKLVFLITVSFFWVVKGLEANSCRLLLFLPCMLILRGVLLRLTNADSPWDSYLIKNRIWTYPPGVVVGLTAWDIPAEELFFFVIQTFNTSLLYMILSKPTFHPIYLSKKTGWGKIAGQILFASAIIFGLVSVSSGGEGMYMGLILIWACPFLLFLWSISYQFIVNLPWTNTALPIALPTLYLWVVDTFALRRGTWSITSGTKYGVVLWDGLEIEEAVFFLLTNTLIVFGLIACDNNLAILDTFPEHFPRTKGVPSLLTIIRTLILPKEKYDEERIQGLVSAVALLRKKSRSFYLASGTFEGRLRIDLIRLYAFCRAADDLVDEAPSVDDSRASIEKLRKFLDLAYEENQEEPSQRLREYVTSSIPEMFHMALLQLPTYYLPKQPLDDLLKGFDTDLLFDRKSGAFPIETTEDLDIYGSRVAGTVAELCNHLILYHTPEAVPEDIQREVVASGQEMGIALQYVNIARDIKTDAEIDRVYLPLSWLKEAQLTPEDVIQQPHGPTIEALRHKLLDRAFEKYNMAKGAIDKLPSEGKGPIRVAVESYMEIGRVLREKGPTMKKGRATVPKMRRIRVAWSALNK.

The lycopene beta-cyclase stretch occupies residues 1–268 (MGWEYAQVHL…IVFGLIACDN (268 aa)). 7 consecutive transmembrane segments (helical) span residues 3 to 23 (WEYA…LAAV), 31 to 51 (LDVF…VKGL), 112 to 130 (LFFF…MILS), 148 to 168 (IAGQ…VSSG), 171 to 191 (GMYM…LWSI), 203 to 223 (NTAL…TFAL), and 246 to 266 (IEEA…LIAC). The interval 275–612 (TFPEHFPRTK…IRVAWSALNK (338 aa)) is phytoene synthase.

It in the N-terminal section; belongs to the lycopene beta-cyclase family. This sequence in the C-terminal section; belongs to the phytoene/squalene synthase family.

The protein localises to the membrane. The catalysed reaction is all-trans-lycopene = gamma-carotene. The enzyme catalyses gamma-carotene = all-trans-beta-carotene. It carries out the reaction 2 (2E,6E,10E)-geranylgeranyl diphosphate = 15-cis-phytoene + 2 diphosphate. It functions in the pathway carotenoid biosynthesis; beta-carotene biosynthesis. It participates in carotenoid biosynthesis; phytoene biosynthesis; all-trans-phytoene from geranylgeranyl diphosphate: step 1/1. Its function is as follows. Bifunctional enzyme; part of the car gene cluster that mediates the biosynthesis of neurosporaxanthin, a carboxylic apocarotenoid acting as an essential protective pigments and leading to orange pigmentation. CarAR catalyzes the first step of the pathway by converting geranylgeranyl diphosphate to phytoene, as well as the later cyclization step that transforms the carB product lycopene into gamma-carotene. CarAR also converts part of gamma-carotene into beta-carotene. Neurosporaxanthin is synthesized from geranyl-geranyl pyrophosphate (GGPP) through several enzymatic activities. Phytoene synthase activity performed by the bifunctional enzyme carAR first produces phytoene from geranyl-geranyl pyrophosphate (GGPP). The phytoene dehydrogenase carB then introduces 4 desaturations to lead to lycopene which is substrate of the carotene cyclase activity of carAR that leads to the production of gamma-carotene. CarB then performs a 5th desaturation reaction to yield torulene. Torulene is the substrate of the dioxidase carT that breaks the molecule, removing five carbon atoms to yield beta-apo-4'-carotenal, whereas the aldehyde dehydrogenase carD mediates the last step by converting beta-apo-4'-carotenal into neurosporaxanthin. The protein is Bifunctional lycopene cyclase/phytoene synthase of Fusarium fujikuroi (Bakanae and foot rot disease fungus).